A 153-amino-acid chain; its full sequence is Nucleoside diphosphate kinase (153 aa).

Positions 13, 61, 89, 95, 106, and 116 each coordinate ATP. The Pros-phosphohistidine intermediate role is filled by His-119.

The protein belongs to the NDK family. Mg(2+) is required as a cofactor.

The protein localises to the cytoplasm. It localises to the cell membrane. The catalysed reaction is a 2'-deoxyribonucleoside 5'-diphosphate + ATP = a 2'-deoxyribonucleoside 5'-triphosphate + ADP. It carries out the reaction a ribonucleoside 5'-diphosphate + ATP = a ribonucleoside 5'-triphosphate + ADP. Its function is as follows. Major role in the synthesis of nucleoside triphosphates other than ATP. The ATP gamma phosphate is transferred to the NDP beta phosphate via a ping-pong mechanism, using a phosphorylated active-site intermediate. The sequence is that of Nucleoside diphosphate kinase from Gallus gallus (Chicken).